The primary structure comprises 1192 residues: DNA topoisomerase 2 (1192 aa).

ATP-binding positions include N64, N95, and 142–149; that span reads GTNGVGLK. Residues E438, D539, and D541 each contribute to the Mg(2+) site. A Topo IIA-type catalytic domain is found at 707–1174; that stretch reads IPNFLDGMTR…PGASVWLEEI (468 aa). Y800 serves as the catalytic O-(5'-phospho-DNA)-tyrosine intermediate.

It belongs to the type II topoisomerase family. Requires Mg(2+) as cofactor. The cofactor is Mn(2+). It depends on Ca(2+) as a cofactor.

The protein resides in the host cytoplasm. The enzyme catalyses ATP-dependent breakage, passage and rejoining of double-stranded DNA.. Type II topoisomerase. Processively relaxes supercoiled DNA. Displays DNA-supercoiling activity only when associated with the viral histone-like protein. This chain is DNA topoisomerase 2, found in African swine fever virus (isolate Pig/Kenya/KEN-50/1950) (ASFV).